We begin with the raw amino-acid sequence, 378 residues long: 1-acyl-sn-glycerol-3-phosphate acyltransferase delta (378 aa).

A helical transmembrane segment spans residues 11–31; the sequence is FLCHLVFCYVFIASGLIINTV. An HXXXXD motif motif is present at residues 96 to 101; it reads HKFEID. 3 consecutive transmembrane segments (helical) span residues 125–145, 307–327, and 338–358; these read ELAY…VFCS, TLVN…QFLV, and LASF…MIGV.

The protein belongs to the 1-acyl-sn-glycerol-3-phosphate acyltransferase family.

It is found in the endoplasmic reticulum membrane. The catalysed reaction is a 1-acyl-sn-glycero-3-phosphate + an acyl-CoA = a 1,2-diacyl-sn-glycero-3-phosphate + CoA. The enzyme catalyses (4Z,7Z,10Z,13Z,16Z,19Z)-docosahexaenoyl-CoA + 1-hexadecanoyl-sn-glycero-3-phosphate = 1-hexadecanoyl-2-(4Z,7Z,10Z,13Z,16Z,19Z-docosahexaenoyl)-sn-glycero-3-phosphate + CoA. It carries out the reaction 1-octadecanoyl-sn-glycero-3-phosphate + (9Z,12Z)-octadecadienoyl-CoA = 1-octadecanoyl-2-(9Z,12Z-octadecadienoyl)-sn-glycero-3-phosphate + CoA. It catalyses the reaction 1-octadecanoyl-sn-glycero-3-phosphate + (4Z,7Z,10Z,13Z,16Z,19Z)-docosahexaenoyl-CoA = 1-octadecanoyl-2-(4Z,7Z,10Z,13Z,16Z,19Z-docosahexaenoyl)-sn-glycero-3-phosphate + CoA. The catalysed reaction is (4Z,7Z,10Z,13Z,16Z,19Z)-docosahexaenoyl-CoA + 1-(9Z-octadecenoyl)-sn-glycero-3-phosphate = 1-(9Z-octadecenoyl)-2-(4Z,7Z,10Z,13Z,16Z,19Z-docosahexaenoyl)-sn-glycero-3-phosphate + CoA. Its pathway is phospholipid metabolism; CDP-diacylglycerol biosynthesis; CDP-diacylglycerol from sn-glycerol 3-phosphate: step 2/3. Converts 1-acyl-sn-glycerol-3-phosphate (lysophosphatidic acid or LPA) into 1,2-diacyl-sn-glycerol-3-phosphate (phosphatidic acid or PA) by incorporating an acyl moiety at the sn-2 position of the glycerol backbone. Exhibits high acyl-CoA specificity for polyunsaturated fatty acyl-CoA, especially docosahexaenoyl-CoA (22:6-CoA, DHA-CoA). The protein is 1-acyl-sn-glycerol-3-phosphate acyltransferase delta (AGPAT4) of Macaca fascicularis (Crab-eating macaque).